Here is a 195-residue protein sequence, read N- to C-terminus: Rubrerythrin-1 (195 aa).

Positions 3–150 (SLKGTKTAEN…ALLKNIEENK (148 aa)) constitute a Ferritin-like diiron domain. Fe(3+) is bound by residues E20, E53, E98, E101, E132, H135, C162, C165, C178, and C181. Residues 157–191 (VKFWKCIKCGYIFEGKTAPKVCPACLHPQAYFEIL) form the Rubredoxin-like domain.

Homodimer. The cofactor is Fe(3+).

The enzyme catalyses H2O2 + NADH + H(+) = NAD(+) + 2 H2O. Its activity is regulated as follows. Rubredoxin (Rd) increases the NADH consumption rate by serving as an intermediary electron-transfer shuttle between NROR and RubY. Functions as the terminal component of an NADH peroxidase (NADH:H(2)O(2) oxidoreductase) when using NADH:rubredoxin oxidoreductase (NROR) as the electron transport intermediary from NADH to RubY. The chain is Rubrerythrin-1 (rbr1) from Clostridium acetobutylicum (strain ATCC 824 / DSM 792 / JCM 1419 / IAM 19013 / LMG 5710 / NBRC 13948 / NRRL B-527 / VKM B-1787 / 2291 / W).